The sequence spans 358 residues: UDP-N-acetylglucosamine--N-acetylmuramyl-(pentapeptide) pyrophosphoryl-undecaprenol N-acetylglucosamine transferase (358 aa).

Residues 11 to 13, N120, R161, S188, and Q282 each bind UDP-N-acetyl-alpha-D-glucosamine; that span reads TGG.

It belongs to the glycosyltransferase 28 family. MurG subfamily.

Its subcellular location is the cell inner membrane. It carries out the reaction di-trans,octa-cis-undecaprenyl diphospho-N-acetyl-alpha-D-muramoyl-L-alanyl-D-glutamyl-meso-2,6-diaminopimeloyl-D-alanyl-D-alanine + UDP-N-acetyl-alpha-D-glucosamine = di-trans,octa-cis-undecaprenyl diphospho-[N-acetyl-alpha-D-glucosaminyl-(1-&gt;4)]-N-acetyl-alpha-D-muramoyl-L-alanyl-D-glutamyl-meso-2,6-diaminopimeloyl-D-alanyl-D-alanine + UDP + H(+). The protein operates within cell wall biogenesis; peptidoglycan biosynthesis. Cell wall formation. Catalyzes the transfer of a GlcNAc subunit on undecaprenyl-pyrophosphoryl-MurNAc-pentapeptide (lipid intermediate I) to form undecaprenyl-pyrophosphoryl-MurNAc-(pentapeptide)GlcNAc (lipid intermediate II). The polypeptide is UDP-N-acetylglucosamine--N-acetylmuramyl-(pentapeptide) pyrophosphoryl-undecaprenol N-acetylglucosamine transferase (Synechococcus sp. (strain CC9311)).